The following is a 498-amino-acid chain: Probable malate:quinone oxidoreductase (498 aa).

It belongs to the MQO family. FAD serves as cofactor.

The enzyme catalyses (S)-malate + a quinone = a quinol + oxaloacetate. It functions in the pathway carbohydrate metabolism; tricarboxylic acid cycle; oxaloacetate from (S)-malate (quinone route): step 1/1. This is Probable malate:quinone oxidoreductase from Prochlorococcus marinus (strain AS9601).